The sequence spans 248 residues: Triosephosphate isomerase (248 aa).

2 residues coordinate substrate: asparagine 10 and lysine 12. Histidine 95 serves as the catalytic Electrophile. Glutamate 165 (proton acceptor) is an active-site residue.

The protein belongs to the triosephosphate isomerase family. As to quaternary structure, homodimer.

The enzyme catalyses D-glyceraldehyde 3-phosphate = dihydroxyacetone phosphate. The protein operates within carbohydrate biosynthesis; gluconeogenesis. Its pathway is carbohydrate degradation; glycolysis; D-glyceraldehyde 3-phosphate from glycerone phosphate: step 1/1. This chain is Triosephosphate isomerase (TPI1), found in Kluyveromyces marxianus (Yeast).